We begin with the raw amino-acid sequence, 347 residues long: RNA 3'-terminal phosphate cyclase (347 aa).

ATP contacts are provided by residues Q109 and 290–294 (YLADQ). H315 (tele-AMP-histidine intermediate) is an active-site residue.

This sequence belongs to the RNA 3'-terminal cyclase family. Type 1 subfamily.

It is found in the cytoplasm. The catalysed reaction is a 3'-end 3'-phospho-ribonucleotide-RNA + ATP = a 3'-end 2',3'-cyclophospho-ribonucleotide-RNA + AMP + diphosphate. Functionally, catalyzes the conversion of 3'-phosphate to a 2',3'-cyclic phosphodiester at the end of RNA. The mechanism of action of the enzyme occurs in 3 steps: (A) adenylation of the enzyme by ATP; (B) transfer of adenylate to an RNA-N3'P to produce RNA-N3'PP5'A; (C) and attack of the adjacent 2'-hydroxyl on the 3'-phosphorus in the diester linkage to produce the cyclic end product. The biological role of this enzyme is unknown but it is likely to function in some aspects of cellular RNA processing. The protein is RNA 3'-terminal phosphate cyclase of Ralstonia nicotianae (strain ATCC BAA-1114 / GMI1000) (Ralstonia solanacearum).